The following is a 78-amino-acid chain: DNA-directed RNA polymerase subunit omega (78 aa).

It belongs to the RNA polymerase subunit omega family. In cyanobacteria the RNAP catalytic core is composed of 2 alpha, 1 beta, 1 beta', 1 gamma and 1 omega subunit. When a sigma factor is associated with the core the holoenzyme is formed, which can initiate transcription.

It carries out the reaction RNA(n) + a ribonucleoside 5'-triphosphate = RNA(n+1) + diphosphate. In terms of biological role, promotes RNA polymerase assembly. Latches the N- and C-terminal regions of the beta' subunit thereby facilitating its interaction with the beta and alpha subunits. The polypeptide is DNA-directed RNA polymerase subunit omega (Prochlorococcus marinus (strain MIT 9515)).